The following is a 227-amino-acid chain: Cytochrome c oxidase subunit 2 (227 aa).

Over 1-14 the chain is Mitochondrial intermembrane; it reads MAYPFQLGFQDATS. The helical transmembrane segment at 15 to 45 threads the bilayer; sequence PIMEELLHFHDHTLMIVFLISSLVLYIISSM. The Mitochondrial matrix segment spans residues 46–59; that stretch reads LTTKLTHTSTMDAQ. The helical transmembrane segment at 60–87 threads the bilayer; that stretch reads EVETIWTILPAIILILIALPSLRILYMM. Over 88 to 227 the chain is Mitochondrial intermembrane; the sequence is DEINNPSLTV…YFEEWSASML (140 aa). Cu cation contacts are provided by His161, Cys196, Glu198, Cys200, His204, and Met207. Glu198 provides a ligand contact to Mg(2+).

It belongs to the cytochrome c oxidase subunit 2 family. In terms of assembly, component of the cytochrome c oxidase (complex IV, CIV), a multisubunit enzyme composed of 14 subunits. The complex is composed of a catalytic core of 3 subunits MT-CO1, MT-CO2 and MT-CO3, encoded in the mitochondrial DNA, and 11 supernumerary subunits COX4I, COX5A, COX5B, COX6A, COX6B, COX6C, COX7A, COX7B, COX7C, COX8 and NDUFA4, which are encoded in the nuclear genome. The complex exists as a monomer or a dimer and forms supercomplexes (SCs) in the inner mitochondrial membrane with NADH-ubiquinone oxidoreductase (complex I, CI) and ubiquinol-cytochrome c oxidoreductase (cytochrome b-c1 complex, complex III, CIII), resulting in different assemblies (supercomplex SCI(1)III(2)IV(1) and megacomplex MCI(2)III(2)IV(2)). Found in a complex with TMEM177, COA6, COX18, COX20, SCO1 and SCO2. Interacts with TMEM177 in a COX20-dependent manner. Interacts with COX20. Interacts with COX16. Cu cation is required as a cofactor.

Its subcellular location is the mitochondrion inner membrane. It carries out the reaction 4 Fe(II)-[cytochrome c] + O2 + 8 H(+)(in) = 4 Fe(III)-[cytochrome c] + 2 H2O + 4 H(+)(out). Functionally, component of the cytochrome c oxidase, the last enzyme in the mitochondrial electron transport chain which drives oxidative phosphorylation. The respiratory chain contains 3 multisubunit complexes succinate dehydrogenase (complex II, CII), ubiquinol-cytochrome c oxidoreductase (cytochrome b-c1 complex, complex III, CIII) and cytochrome c oxidase (complex IV, CIV), that cooperate to transfer electrons derived from NADH and succinate to molecular oxygen, creating an electrochemical gradient over the inner membrane that drives transmembrane transport and the ATP synthase. Cytochrome c oxidase is the component of the respiratory chain that catalyzes the reduction of oxygen to water. Electrons originating from reduced cytochrome c in the intermembrane space (IMS) are transferred via the dinuclear copper A center (CU(A)) of subunit 2 and heme A of subunit 1 to the active site in subunit 1, a binuclear center (BNC) formed by heme A3 and copper B (CU(B)). The BNC reduces molecular oxygen to 2 water molecules using 4 electrons from cytochrome c in the IMS and 4 protons from the mitochondrial matrix. This is Cytochrome c oxidase subunit 2 (MT-CO2) from Equus asinus (Donkey).